The chain runs to 498 residues: Probable cytosol aminopeptidase (498 aa).

The Mn(2+) site is built by lysine 269 and aspartate 274. Lysine 281 is an active-site residue. Mn(2+)-binding residues include aspartate 292, aspartate 351, and glutamate 353. Arginine 355 is a catalytic residue.

It belongs to the peptidase M17 family. It depends on Mn(2+) as a cofactor.

The protein localises to the cytoplasm. It catalyses the reaction Release of an N-terminal amino acid, Xaa-|-Yaa-, in which Xaa is preferably Leu, but may be other amino acids including Pro although not Arg or Lys, and Yaa may be Pro. Amino acid amides and methyl esters are also readily hydrolyzed, but rates on arylamides are exceedingly low.. The catalysed reaction is Release of an N-terminal amino acid, preferentially leucine, but not glutamic or aspartic acids.. Functionally, presumably involved in the processing and regular turnover of intracellular proteins. Catalyzes the removal of unsubstituted N-terminal amino acids from various peptides. The protein is Probable cytosol aminopeptidase of Glaesserella parasuis serovar 5 (strain SH0165) (Haemophilus parasuis).